Here is a 541-residue protein sequence, read N- to C-terminus: Glucose-6-phosphate isomerase (541 aa).

The active-site Proton donor is glutamate 346. Catalysis depends on residues histidine 377 and lysine 506.

The protein belongs to the GPI family.

Its subcellular location is the cytoplasm. It catalyses the reaction alpha-D-glucose 6-phosphate = beta-D-fructose 6-phosphate. Its pathway is carbohydrate biosynthesis; gluconeogenesis. It functions in the pathway carbohydrate degradation; glycolysis; D-glyceraldehyde 3-phosphate and glycerone phosphate from D-glucose: step 2/4. In terms of biological role, catalyzes the reversible isomerization of glucose-6-phosphate to fructose-6-phosphate. The sequence is that of Glucose-6-phosphate isomerase from Rhizobium etli (strain ATCC 51251 / DSM 11541 / JCM 21823 / NBRC 15573 / CFN 42).